A 743-amino-acid chain; its full sequence is Amylovoran biosynthesis protein AmsF (743 aa).

A signal peptide spans 1-27; the sequence is MKRRELIRTAFSTIVATAALSSVSARA.

The protein to R.meliloti ExoP.

It localises to the periplasm. The protein operates within glycan metabolism; exopolysaccharide biosynthesis. In terms of biological role, involved in the biosynthesis of amylovoran which functions as a virulence factor. May be involved in the polymerization or late modification of the repeating units. The chain is Amylovoran biosynthesis protein AmsF (amsF) from Erwinia amylovora (Fire blight bacteria).